We begin with the raw amino-acid sequence, 435 residues long: KSGMEKTVQELVKELRKMSSVVQTDKDLANVACVSAGGNTDIGSLISDAMAKVGRTGVVTMEEGKTAEDQLVFVEGMQFERGYTSPYFVTDPERMICEYENCKILLVDKKISTARDIITILESAIRGNYPLLIMAEEVEQEALATLVVNKLRGTLKVVAIKAPGFGERRSSYLEDIAILTGGTVVGDEMGVSLEQATDAVLGTAAKITITKERTTVVGDGSTAADVAARVKQIRNLQMQTDQDYEREKLQERIARLSGGVAIIQVGAQTETELKEKKLRVEDALNATRAAVEEGVVPGGGCTLLRLSEKVDVIKRRMTDPEQQMGADIIKRALCYPIKLIAQNAGVNGSVVMNEVMKNLDRPHYGYNAATDSFENLMETGIIDPSKVVRCSMENAVSVAKTFLLADVVVTELKEIEAGAKPNPVAPGAAGFGGGL.

It belongs to the chaperonin (HSP60) family. Oligomer of probably six alpha and six beta subunits.

Its subcellular location is the plastid. It is found in the chloroplast. This protein binds RuBisCO small and large subunits and is implicated in the assembly of the enzyme oligomer. This chain is RuBisCO large subunit-binding protein subunit beta-1, found in Chlamydomonas reinhardtii (Chlamydomonas smithii).